A 367-amino-acid chain; its full sequence is UDP-N-acetylglucosamine--N-acetylmuramyl-(pentapeptide) pyrophosphoryl-undecaprenol N-acetylglucosamine transferase (367 aa).

UDP-N-acetyl-alpha-D-glucosamine-binding positions include 18–20 (TGG), N130, R170, S196, I252, 271–276 (ALTVSE), and Q297.

It belongs to the glycosyltransferase 28 family. MurG subfamily.

It localises to the cell inner membrane. The catalysed reaction is di-trans,octa-cis-undecaprenyl diphospho-N-acetyl-alpha-D-muramoyl-L-alanyl-D-glutamyl-meso-2,6-diaminopimeloyl-D-alanyl-D-alanine + UDP-N-acetyl-alpha-D-glucosamine = di-trans,octa-cis-undecaprenyl diphospho-[N-acetyl-alpha-D-glucosaminyl-(1-&gt;4)]-N-acetyl-alpha-D-muramoyl-L-alanyl-D-glutamyl-meso-2,6-diaminopimeloyl-D-alanyl-D-alanine + UDP + H(+). Its pathway is cell wall biogenesis; peptidoglycan biosynthesis. Functionally, cell wall formation. Catalyzes the transfer of a GlcNAc subunit on undecaprenyl-pyrophosphoryl-MurNAc-pentapeptide (lipid intermediate I) to form undecaprenyl-pyrophosphoryl-MurNAc-(pentapeptide)GlcNAc (lipid intermediate II). The protein is UDP-N-acetylglucosamine--N-acetylmuramyl-(pentapeptide) pyrophosphoryl-undecaprenol N-acetylglucosamine transferase of Shewanella frigidimarina (strain NCIMB 400).